Reading from the N-terminus, the 709-residue chain is Meiotic sister-chromatid recombination protein 6, mitochondrial (709 aa).

A mitochondrion-targeting transit peptide spans 1 to 29; the sequence is MLRINQRLLVRSLRDAQYQYLKSTALRFL.

The protein localises to the mitochondrion. Its function is as follows. May be involved in the control of meiotic sister-chromatid recombination. The chain is Meiotic sister-chromatid recombination protein 6, mitochondrial (MSC6) from Candida glabrata (strain ATCC 2001 / BCRC 20586 / JCM 3761 / NBRC 0622 / NRRL Y-65 / CBS 138) (Yeast).